A 363-amino-acid chain; its full sequence is Peroxisomal (S)-2-hydroxyacid oxidase GLO3 (363 aa).

Residues 1 to 357 (MDQIVNVDEF…TRNHVRTENE (357 aa)) form the FMN hydroxy acid dehydrogenase domain. FMN is bound by residues 78 to 80 (PTG), Ser107, 128 to 130 (QIY), and Thr156. Residue Tyr130 participates in a 2-oxocarboxylate binding. Arg165 provides a ligand contact to a 2-oxocarboxylate. FMN is bound by residues Lys228 and Ser250. The active-site Proton acceptor is the His252. Arg255 contributes to the a 2-oxocarboxylate binding site. Residues 283–287 (DGGVR) and 306–307 (GR) contribute to the FMN site. Residues 361–363 (SML) carry the Microbody targeting signal motif.

It belongs to the FMN-dependent alpha-hydroxy acid dehydrogenase family. In terms of assembly, homotetramer. The cofactor is FMN.

It localises to the peroxisome. The enzyme catalyses a (2S)-2-hydroxycarboxylate + O2 = a 2-oxocarboxylate + H2O2. It carries out the reaction 2-hydroxy-4-methylpentanoate + O2 = 4-methyl-2-oxopentanoate + H2O2. The catalysed reaction is 2-hydroxyhexanoate + O2 = 2-oxohexanoate + H2O2. It catalyses the reaction 2-hydroxyoctanoate + O2 = 2-oxooctanoate + H2O2. Its function is as follows. Oxidase that catalyzes the oxidation of a broad range of 2-hydroxyacids to the corresponding 2-oxoacids, with a reduction of O2 to H2O2. Displays the highest activity with leucic acid (2-hydroxy-4-methylpentanoate) and has intermediate activity with 2-hydroxyhexanoate and 2-hydroxyoctanote. Shows lower activity with 2-hydroxydodecanoate, valic acid, and isoleucic acid and extremely low activity with glycolate and L-lactate. Cannot use 2-hydroxyhexadecanoate or D-lactate as substrates. May be involved in the conversion or degradation of 2-hydroxyacids produced during the metabolism of fatty acids or amino acids. In Arabidopsis thaliana (Mouse-ear cress), this protein is Peroxisomal (S)-2-hydroxyacid oxidase GLO3 (GLO3).